A 491-amino-acid polypeptide reads, in one-letter code: Cysteine--tRNA ligase (491 aa).

Cysteine 31 lines the Zn(2+) pocket. A 'HIGH' region motif is present at residues 33-43; the sequence is PTVYGDAHLGH. Zn(2+) contacts are provided by cysteine 226, histidine 251, and glutamate 255. The 'KMSKS' region signature appears at 283-287; sequence KMGKS. Lysine 286 contributes to the ATP binding site.

The protein belongs to the class-I aminoacyl-tRNA synthetase family. As to quaternary structure, monomer. Zn(2+) serves as cofactor.

Its subcellular location is the cytoplasm. The enzyme catalyses tRNA(Cys) + L-cysteine + ATP = L-cysteinyl-tRNA(Cys) + AMP + diphosphate. The polypeptide is Cysteine--tRNA ligase (Bacteroides fragilis (strain ATCC 25285 / DSM 2151 / CCUG 4856 / JCM 11019 / LMG 10263 / NCTC 9343 / Onslow / VPI 2553 / EN-2)).